The following is a 400-amino-acid chain: MKIETLPAEFEPARPILSRIEEAGFEAYFVGGCVRDTILNLPIHDIDIATSAYPAEIKQIFSRTVDTGIEHGTVMILDHGTGYETTTFRTESGYQDFRRPDSVTFVRSLKEDLQRRDFTINALALKEDGTVVDLFDGLGDLKRHLIKAVGDPAERFHEDALRMMRAARFAAKLGFQIEPGTLAGMSQNAALLEKIAVERIQVEFEKLLLGKAVQNGLAAMLDTKLYLHCPGLKEGGQGLQYLAQQPLTLNNATQAWGALAICLGLDKNQLRPFLKGWKLSNGLITAVSRAVPLVEKLTTKTAGASDLYQAGQQAVADAVVIANSLGGQVDPQAVQAAYQALPIKESGELALNGGDLIKAGVKPGPAMGKALTTLTKQVVEGQLANDYQTLLKAAGELLKA.

Residues Gly-32 and Arg-35 each contribute to the ATP site. Residues Gly-32 and Arg-35 each contribute to the CTP site. Asp-45 and Asp-47 together coordinate Mg(2+). ATP is bound by residues Arg-116, Asp-159, Arg-162, Arg-165, and Arg-168. Residues Arg-116, Asp-159, Arg-162, Arg-165, and Arg-168 each coordinate CTP.

The protein belongs to the tRNA nucleotidyltransferase/poly(A) polymerase family. Bacterial CCA-adding enzyme type 3 subfamily. Homodimer. It depends on Mg(2+) as a cofactor.

It catalyses the reaction a tRNA precursor + 2 CTP + ATP = a tRNA with a 3' CCA end + 3 diphosphate. It carries out the reaction a tRNA with a 3' CCA end + 2 CTP + ATP = a tRNA with a 3' CCACCA end + 3 diphosphate. Functionally, catalyzes the addition and repair of the essential 3'-terminal CCA sequence in tRNAs without using a nucleic acid template. Adds these three nucleotides in the order of C, C, and A to the tRNA nucleotide-73, using CTP and ATP as substrates and producing inorganic pyrophosphate. tRNA 3'-terminal CCA addition is required both for tRNA processing and repair. Also involved in tRNA surveillance by mediating tandem CCA addition to generate a CCACCA at the 3' terminus of unstable tRNAs. While stable tRNAs receive only 3'-terminal CCA, unstable tRNAs are marked with CCACCA and rapidly degraded. This chain is CCA-adding enzyme, found in Limosilactobacillus fermentum (strain NBRC 3956 / LMG 18251) (Lactobacillus fermentum).